We begin with the raw amino-acid sequence, 448 residues long: Probable glycine dehydrogenase (decarboxylating) subunit 1 (448 aa).

This sequence belongs to the GcvP family. N-terminal subunit subfamily. In terms of assembly, the glycine cleavage system is composed of four proteins: P, T, L and H. In this organism, the P 'protein' is a heterodimer of two subunits.

The enzyme catalyses N(6)-[(R)-lipoyl]-L-lysyl-[glycine-cleavage complex H protein] + glycine + H(+) = N(6)-[(R)-S(8)-aminomethyldihydrolipoyl]-L-lysyl-[glycine-cleavage complex H protein] + CO2. In terms of biological role, the glycine cleavage system catalyzes the degradation of glycine. The P protein binds the alpha-amino group of glycine through its pyridoxal phosphate cofactor; CO(2) is released and the remaining methylamine moiety is then transferred to the lipoamide cofactor of the H protein. The protein is Probable glycine dehydrogenase (decarboxylating) subunit 1 of Staphylococcus aureus (strain Mu3 / ATCC 700698).